A 153-amino-acid chain; its full sequence is Sec-independent protein translocase protein TatB (153 aa).

The helical transmembrane segment at methionine 1–glycine 21 threads the bilayer. Residues methionine 78 to proline 153 are disordered.

Belongs to the TatB family. The Tat system comprises two distinct complexes: a TatABC complex, containing multiple copies of TatA, TatB and TatC subunits, and a separate TatA complex, containing only TatA subunits. Substrates initially bind to the TatABC complex, which probably triggers association of the separate TatA complex to form the active translocon.

Its subcellular location is the cell inner membrane. Part of the twin-arginine translocation (Tat) system that transports large folded proteins containing a characteristic twin-arginine motif in their signal peptide across membranes. Together with TatC, TatB is part of a receptor directly interacting with Tat signal peptides. TatB may form an oligomeric binding site that transiently accommodates folded Tat precursor proteins before their translocation. The protein is Sec-independent protein translocase protein TatB of Pseudomonas savastanoi pv. phaseolicola (strain 1448A / Race 6) (Pseudomonas syringae pv. phaseolicola (strain 1448A / Race 6)).